The sequence spans 425 residues: Serine--tRNA ligase (425 aa).

228-230 serves as a coordination point for L-serine; the sequence is TSE. 259–261 is a binding site for ATP; the sequence is RSE. Glu-282 lines the L-serine pocket. An ATP-binding site is contributed by 346-349; it reads EISS. Residue Ser-384 coordinates L-serine.

Belongs to the class-II aminoacyl-tRNA synthetase family. Type-1 seryl-tRNA synthetase subfamily. As to quaternary structure, homodimer. The tRNA molecule binds across the dimer.

The protein resides in the cytoplasm. The enzyme catalyses tRNA(Ser) + L-serine + ATP = L-seryl-tRNA(Ser) + AMP + diphosphate + H(+). The catalysed reaction is tRNA(Sec) + L-serine + ATP = L-seryl-tRNA(Sec) + AMP + diphosphate + H(+). The protein operates within aminoacyl-tRNA biosynthesis; selenocysteinyl-tRNA(Sec) biosynthesis; L-seryl-tRNA(Sec) from L-serine and tRNA(Sec): step 1/1. Catalyzes the attachment of serine to tRNA(Ser). Is also able to aminoacylate tRNA(Sec) with serine, to form the misacylated tRNA L-seryl-tRNA(Sec), which will be further converted into selenocysteinyl-tRNA(Sec). This chain is Serine--tRNA ligase, found in Ehrlichia ruminantium (strain Gardel).